The sequence spans 704 residues: Glycogen [starch] synthase, liver (704 aa).

The residue at position 8 (Ser-8) is a Phosphoserine; by AMPK and PKA. Ser-11 carries the post-translational modification Phosphoserine. Position 40 (Lys-40) interacts with UDP. UDP-alpha-D-glucose contacts are provided by His-205 and Arg-211. Alpha-D-glucose 6-phosphate is bound by residues His-291, Glu-292, Gln-294, His-297, and Lys-301. A UDP-binding site is contributed by Arg-331. Arg-331 provides a ligand contact to UDP-alpha-D-glucose. An alpha-D-glucose 6-phosphate-binding site is contributed by His-501. Positions 510, 512, and 513 each coordinate UDP-alpha-D-glucose. Residue Thr-515 coordinates UDP. Positions 582 and 586 each coordinate alpha-D-glucose 6-phosphate. Residues 620-704 (KFHLEPTSPP…KKKLHGEYKN (85 aa)) form a disordered region. Residue Ser-627 is modified to Phosphoserine. Residues Ser-641, Ser-645, Ser-649, and Ser-653 each carry the phosphoserine; by GSK3-alpha and GSK3-beta modification. Positions 647–657 (SGSQASSPQCS) are enriched in low complexity. Ser-657 is modified (phosphoserine; by CK2). Positions 658 to 675 (DAEDEEDEDERYDEEEEA) are enriched in acidic residues. Ser-684 is subject to Phosphoserine.

The protein belongs to the glycosyltransferase 3 family. As to quaternary structure, part of the glycogen synthase (GS)-glycogenin complex, a heterooctamer composed of a tetramer of GS and 2 dimers of glycogenin, where each GS protomer binds to one glycogenin subunit (via glycogenin C-terminus); the GS tetramer may dissociate from glycogenin dimers to continue glycogen polymerization on its own. May also form a heterooctamer complex with GYG1 (via GYG1 C-terminus). Post-translationally, phosphorylation reduces the activity towards UDP-alpha-D-glucose. Primed phosphorylation at Ser-657 (site 5) by CSNK2A1 and CSNK2A2 is required for inhibitory phosphorylation at Ser-641 (site 3a), Ser-645 (site 3b), Ser-649 (site 3c) and Ser-653 (site 4) by GSK3A an GSK3B. Dephosphorylation at Ser-641 and Ser-645 by PP1 activates the enzyme. Phosphorylation at Ser-8 is not required for interaction with GYG1. Interaction with GYG1 does not regulate the phosphorylation at Ser-8 and Ser-641. As to expression, specifically expressed in liver.

It catalyses the reaction [(1-&gt;4)-alpha-D-glucosyl](n) + UDP-alpha-D-glucose = [(1-&gt;4)-alpha-D-glucosyl](n+1) + UDP + H(+). The protein operates within glycan biosynthesis; glycogen biosynthesis. With respect to regulation, allosteric activation by glucose-6-phosphate. Phosphorylation reduces the activity towards UDP-glucose. When in the non-phosphorylated state, glycogen synthase does not require glucose-6-phosphate as an allosteric activator; when phosphorylated it does. In terms of biological role, glycogen synthase participates in the glycogen biosynthetic process along with glycogenin and glycogen branching enzyme. Extends the primer composed of a few glucose units formed by glycogenin by adding new glucose units to it. In this context, glycogen synthase transfers the glycosyl residue from UDP-Glc to the non-reducing end of alpha-1,4-glucan. The protein is Glycogen [starch] synthase, liver of Mus musculus (Mouse).